We begin with the raw amino-acid sequence, 384 residues long: Monomethylxanthine methyltransferase 2 (384 aa).

The S-adenosyl-L-homocysteine site is built by Tyr-18, Cys-61, Asn-66, Asp-100, Leu-101, Ser-139, Phe-140, and Cys-156. Theobromine is bound by residues Tyr-157, His-160, and Trp-161. Mg(2+) contacts are provided by Asn-178, Phe-262, and Asn-263. Tyr-368 serves as a coordination point for theobromine.

This sequence belongs to the methyltransferase superfamily. Type-7 methyltransferase family. Mg(2+) serves as cofactor. Expressed, at low levels, in young leaves, floral buds and immature fruits (grains), but not in old leaves and mature fruits. Highly expressed in developing endosperm and flower buds. Detected in young leaves.

It carries out the reaction 7-methylxanthine + S-adenosyl-L-methionine = theobromine + S-adenosyl-L-homocysteine + H(+). The protein operates within alkaloid biosynthesis. Its function is as follows. Involved in the biosynthesis of caffeine. Catalyzes the conversion of 7-methylxanthine (7mX) to theobromine and with a lower activity of paraxanthine to caffeine. Does not have 1-N-methylation activity. The chain is Monomethylxanthine methyltransferase 2 from Coffea arabica (Arabian coffee).